The primary structure comprises 473 residues: Glutathione reductase, mitochondrial (473 aa).

Residues Ser30 and Gly31 each coordinate FAD. Glutathione is bound at residue Ser30. Arg37 is a glutathione binding site. The FAD site is built by Glu50, Thr57, Cys58, and Lys66. Cysteines 58 and 63 form a disulfide. Tyr114 lines the glutathione pocket. Ala130 is a binding site for FAD. NADP(+) contacts are provided by Ala190, Ile193, Glu196, Arg213, Arg219, and Gly279. FAD is bound at residue Asp320. Residue Leu326 participates in NADP(+) binding. Thr328 contacts FAD. Arg336 is a glutathione binding site. Val359 is a binding site for NADP(+). An FAD-binding site is contributed by His456. His456 functions as the Proton acceptor in the catalytic mechanism.

It belongs to the class-I pyridine nucleotide-disulfide oxidoreductase family. FAD is required as a cofactor. In terms of tissue distribution, expressed at all larval stages and in adults in intestine, vulva muscle, pharynx and some cells in the tail.

It localises to the cytoplasm. The protein localises to the mitochondrion. It carries out the reaction 2 glutathione + NADP(+) = glutathione disulfide + NADPH + H(+). Its function is as follows. Catalyzes the reduction of glutathione disulfide (GSSG) to reduced glutathione (GSH). Constitutes the major mechanism to maintain a high GSH:GSSG ratio in the cytosol. Involved in resistance to oxidative stress and starvation. Together with thioredoxin reductase txtr-1, required for the reduction of disulfide groups in the cuticle during molting. This chain is Glutathione reductase, mitochondrial, found in Caenorhabditis elegans.